We begin with the raw amino-acid sequence, 198 residues long: Recombination protein RecR (198 aa).

A C4-type zinc finger spans residues 57-72; sequence CSICGNLTDDDPCHIC. Residues 80–175 enclose the Toprim domain; that stretch reads TTILVVEDAK…KVTRLARGLA (96 aa).

The protein belongs to the RecR family.

Its function is as follows. May play a role in DNA repair. It seems to be involved in an RecBC-independent recombinational process of DNA repair. It may act with RecF and RecO. In Streptococcus pyogenes serotype M5 (strain Manfredo), this protein is Recombination protein RecR.